We begin with the raw amino-acid sequence, 85 residues long: Exodeoxyribonuclease 7 small subunit (85 aa).

The disordered stretch occupies residues 66–85; that stretch reads SGEGEEVPLDTPDAEDGDGE. A compositionally biased stretch (acidic residues) spans 68–85; sequence EGEEVPLDTPDAEDGDGE.

The protein belongs to the XseB family. In terms of assembly, heterooligomer composed of large and small subunits.

The protein resides in the cytoplasm. The catalysed reaction is Exonucleolytic cleavage in either 5'- to 3'- or 3'- to 5'-direction to yield nucleoside 5'-phosphates.. Bidirectionally degrades single-stranded DNA into large acid-insoluble oligonucleotides, which are then degraded further into small acid-soluble oligonucleotides. The protein is Exodeoxyribonuclease 7 small subunit of Thioalkalivibrio sulfidiphilus (strain HL-EbGR7).